A 621-amino-acid chain; its full sequence is 1-deoxy-D-xylulose-5-phosphate synthase (621 aa).

Thiamine diphosphate is bound by residues H80 and 121-123 (GHS). Position 152 (D152) interacts with Mg(2+). Thiamine diphosphate-binding positions include 153-154 (GA), N181, Y288, and E370. N181 is a binding site for Mg(2+).

The protein belongs to the transketolase family. DXPS subfamily. Homodimer. Mg(2+) is required as a cofactor. Thiamine diphosphate serves as cofactor.

It catalyses the reaction D-glyceraldehyde 3-phosphate + pyruvate + H(+) = 1-deoxy-D-xylulose 5-phosphate + CO2. The protein operates within metabolic intermediate biosynthesis; 1-deoxy-D-xylulose 5-phosphate biosynthesis; 1-deoxy-D-xylulose 5-phosphate from D-glyceraldehyde 3-phosphate and pyruvate: step 1/1. Catalyzes the acyloin condensation reaction between C atoms 2 and 3 of pyruvate and glyceraldehyde 3-phosphate to yield 1-deoxy-D-xylulose-5-phosphate (DXP). This Erwinia tasmaniensis (strain DSM 17950 / CFBP 7177 / CIP 109463 / NCPPB 4357 / Et1/99) protein is 1-deoxy-D-xylulose-5-phosphate synthase.